A 473-amino-acid polypeptide reads, in one-letter code: GTPase Der (473 aa).

2 consecutive EngA-type G domains span residues F3–R167 and L203–N378. Residues G9–S16, D56–L60, N119–E122, G209–S216, D256–M260, and N321–D324 each bind GTP. The KH-like domain maps to K379–E463.

Belongs to the TRAFAC class TrmE-Era-EngA-EngB-Septin-like GTPase superfamily. EngA (Der) GTPase family. As to quaternary structure, associates with the 50S ribosomal subunit.

GTPase that plays an essential role in the late steps of ribosome biogenesis. The polypeptide is GTPase Der (Rhizobium leguminosarum bv. trifolii (strain WSM2304)).